Reading from the N-terminus, the 730-residue chain is Jacalin-related lectin 5 (730 aa).

In terms of domain architecture, Jacalin-type lectin 1 spans 1–126; sequence MSWDDGKHTK…LNSIDAHFAP (126 aa). A disordered region spans residues 121-450; the sequence is DAHFAPAPPP…GNQWDDGTDH (330 aa). 4 stretches are compositionally biased toward low complexity: residues 138 to 153, 168 to 179, 196 to 207, and 248 to 261; these read GASGIGSDSGSIGSAG, AGGSKPSSGSAG, and TEKNAGGSKSSSGS. A compositionally biased stretch (polar residues) spans 275 to 307; it reads ETVSNIGDTESNAGGSKSNDGANNGASGIESNA. The span at 314 to 323 shows a compositional bias: gly residues; the sequence is FGAGGTGGIG. Low complexity predominate over residues 343–358; it reads DGASGIGSNDGSTGTN. Composition is skewed to polar residues over residues 366-375 and 388-416; these read DSNIEGTENN and IGNSDGSTGTSPEGTESNADGTKTNTGGK. Over residues 417–429 the composition is skewed to low complexity; sequence ESNTGSESNTNSS. 2 consecutive Jacalin-type lectin domains span residues 430–572 and 584–727; these read PQKL…YFVP and PNKV…YFIP.

Belongs to the jacalin lectin family.

This Arabidopsis thaliana (Mouse-ear cress) protein is Jacalin-related lectin 5 (JAL5).